Here is a 413-residue protein sequence, read N- to C-terminus: Tyrosine--tRNA ligase (413 aa).

Positions 59–68 (PTAPDIHLGH) match the 'HIGH' region motif. The 'KMSKS' region motif lies at 243–247 (KMSKS). Lys246 contacts ATP. In terms of domain architecture, S4 RNA-binding spans 351 to 411 (LAIGQLLKQA…GKRRFARVTL (61 aa)).

It belongs to the class-I aminoacyl-tRNA synthetase family. TyrS type 2 subfamily. As to quaternary structure, homodimer.

Its subcellular location is the cytoplasm. The catalysed reaction is tRNA(Tyr) + L-tyrosine + ATP = L-tyrosyl-tRNA(Tyr) + AMP + diphosphate + H(+). Catalyzes the attachment of tyrosine to tRNA(Tyr) in a two-step reaction: tyrosine is first activated by ATP to form Tyr-AMP and then transferred to the acceptor end of tRNA(Tyr). The protein is Tyrosine--tRNA ligase of Burkholderia pseudomallei (strain 1710b).